The primary structure comprises 73 residues: Translation initiation factor IF-1 (73 aa).

Residues 1 to 73 (MAKKDGAIEV…SRGRIVYRYK (73 aa)) form the S1-like domain.

It belongs to the IF-1 family. In terms of assembly, component of the 30S ribosomal translation pre-initiation complex which assembles on the 30S ribosome in the order IF-2 and IF-3, IF-1 and N-formylmethionyl-tRNA(fMet); mRNA recruitment can occur at any time during PIC assembly.

Its subcellular location is the cytoplasm. Functionally, one of the essential components for the initiation of protein synthesis. Stabilizes the binding of IF-2 and IF-3 on the 30S subunit to which N-formylmethionyl-tRNA(fMet) subsequently binds. Helps modulate mRNA selection, yielding the 30S pre-initiation complex (PIC). Upon addition of the 50S ribosomal subunit IF-1, IF-2 and IF-3 are released leaving the mature 70S translation initiation complex. The protein is Translation initiation factor IF-1 of Mycolicibacterium smegmatis (strain ATCC 700084 / mc(2)155) (Mycobacterium smegmatis).